Reading from the N-terminus, the 535-residue chain is Sodium/hydrogen exchanger 1 (535 aa).

At Met1–Ser21 the chain is on the cytoplasmic side. A helical membrane pass occupies residues Val22–Leu42. At Glu43–Arg46 the chain is on the vacuolar side. Residues Trp47–Leu67 traverse the membrane as a helical segment. Topologically, residues Met68–His75 are cytoplasmic. The helical transmembrane segment at Leu76–Ala96 threads the bilayer. The Vacuolar segment spans residues Gly97–Leu114. Residues Phe115–Phe135 form a helical membrane-spanning segment. The Cytoplasmic portion of the chain corresponds to Ser136 to Arg137. A helical membrane pass occupies residues Met138–Thr158. Over Asp159–Pro173 the chain is Vacuolar. A helical membrane pass occupies residues Phe174 to Phe194. At Asn195–Phe218 the chain is on the cytoplasmic side. Residues Tyr219–Ile239 traverse the membrane as a helical segment. Over Lys240–Tyr264 the chain is Vacuolar. The chain crosses the membrane as a helical span at residues Met265–Met285. Topologically, residues Ser286–Ala304 are cytoplasmic. Residues Phe305 to Leu325 traverse the membrane as a helical segment. The Vacuolar portion of the chain corresponds to Asp326–Ser344. A helical transmembrane segment spans residues Ser345 to Leu365. Residues Ser366–Gln381 lie on the Cytoplasmic side of the membrane. The chain crosses the membrane as a helical span at residues Gln382–Asn402. At Lys403–Asn415 the chain is on the vacuolar side. Residues Ala416–Met436 form a helical membrane-spanning segment. At Thr437 to Arg535 the chain is on the cytoplasmic side. The segment at Val452–Thr478 is disordered. The segment covering Ser454–Ser469 has biased composition (low complexity).

Belongs to the monovalent cation:proton antiporter 1 (CPA1) transporter (TC 2.A.36) family.

It localises to the vacuole membrane. It carries out the reaction Na(+)(in) + H(+)(out) = Na(+)(out) + H(+)(in). It catalyses the reaction K(+)(in) + H(+)(out) = K(+)(out) + H(+)(in). Vacuolar antiporter that acts in low affinity electroneutral exchange of protons H(+) for cations such as Na(+) or K(+) across membranes. Plays important roles in the transport of Na(+) and K(+) accumulated in the cytoplasm into vacuoles, and is involved in salt stress tolerance. The protein is Sodium/hydrogen exchanger 1 of Oryza sativa subsp. japonica (Rice).